The following is a 273-amino-acid chain: Large ribosomal subunit protein uL2 (273 aa).

Disordered regions lie at residues 35 to 54 (DKKD…TRHI) and 222 to 273 (GMAM…RRNK). Residues 229–239 (DHPHGGGEGRN) are compositionally biased toward basic and acidic residues. The segment covering 253-273 (KGFKTRKNKRTDKYIVRRRNK) has biased composition (basic residues).

It belongs to the universal ribosomal protein uL2 family. In terms of assembly, part of the 50S ribosomal subunit. Forms a bridge to the 30S subunit in the 70S ribosome.

One of the primary rRNA binding proteins. Required for association of the 30S and 50S subunits to form the 70S ribosome, for tRNA binding and peptide bond formation. It has been suggested to have peptidyltransferase activity; this is somewhat controversial. Makes several contacts with the 16S rRNA in the 70S ribosome. In Aeromonas hydrophila subsp. hydrophila (strain ATCC 7966 / DSM 30187 / BCRC 13018 / CCUG 14551 / JCM 1027 / KCTC 2358 / NCIMB 9240 / NCTC 8049), this protein is Large ribosomal subunit protein uL2.